Consider the following 484-residue polypeptide: MAARPGAITNADSASGGGEEEGKHVKPFTPEKAKEIIMCLQQPAVFYNMVFDWPAQHWTAKHLSEVLHGKQIRFRMGTKSTDTAPQFETACNYVEATLEEFLSWNSDQSSISGAFRDYDHSKFWAYADYKYFVSLFEDKTDIFQDVIWSDFGFPGRNGQESTLWIGSLGAHTPCHLDTYGCNLVFQVQGRKRWHLFPPEDTPFLYPTRIPYEESSVFSKINVVNPDLKRFPQFRKARRHMVTLSPGQVLFVPRHWWHYVESIDPVTVSINSWIELEEDHQTRVEEAITRMLVCALKTAENPHNTRAWLNPTELEETSHEINCHYLNGAISAFFNHYGTSEVVETQALRTNREYTIKEELNMHSHVGVEQAGGHNLSSETVKQEAASPFGLDLVPVTPSSEEPSSERGGIFENDGEDFVSKNGKSFGKRQRMMSESENAVVEQIASDRTVAVSQTFVSTDDLLDCLVNPQVTRIVAQLLIQGRST.

Positions 1–26 (MAARPGAITNADSASGGGEEEGKHVK) are disordered. The interaction with HSPB1 stretch occupies residues 88–208 (ETACNYVEAT…EDTPFLYPTR (121 aa)). A JmjC domain is found at 124–288 (WAYADYKYFV…HQTRVEEAIT (165 aa)). The interval 396–429 (TPSSEEPSSERGGIFENDGEDFVSKNGKSFGKRQ) is disordered.

In terms of assembly, interacts with CRYAB and HSPB1.

It is found in the cytoplasm. May play a role in cellular stress response. The polypeptide is HSPB1-associated protein 1 (HSPBAP1) (Bos taurus (Bovine)).